The primary structure comprises 268 residues: Regulatory protein zeste (268 aa).

A DNA-binding region spans residues 1-72; it reads TAEEKEVLYT…WLNSRLRKQY (72 aa). A compositionally biased stretch (low complexity) spans 94-108; that stretch reads VSVASAVPQQQQQQH. The disordered stretch occupies residues 94-133; sequence VSVASAVPQQQQQQHHQQHDNVKEEPEYQISPDASEHNPQ. The segment covering 110 to 119 has biased composition (basic and acidic residues); it reads QQHDNVKEEP.

In terms of assembly, self-associates forming complexes of several hundred monomers.

The protein localises to the nucleus. Its function is as follows. Involved in transvection phenomena (= synapsis-dependent gene expression), where the synaptic pairing of chromosomes carrying genes with which zeste interacts influences the expression of these genes. Zeste binds to DNA and stimulates transcription from a nearby promoter. The chain is Regulatory protein zeste (z) from Drosophila sechellia (Fruit fly).